Reading from the N-terminus, the 304-residue chain is Oxygen-dependent coproporphyrinogen-III oxidase (304 aa).

Ser-94 is a substrate binding site. The a divalent metal cation site is built by His-98 and His-108. The Proton donor role is filled by His-108. 110–112 (NVR) contacts substrate. A divalent metal cation is bound by residues His-147 and His-177. The interval 242-277 (YVEFNLVWDRGTLFGLQSGGRTESVLMSMPPLARWQ) is important for dimerization. Residue 260-262 (GGR) coordinates substrate.

Belongs to the aerobic coproporphyrinogen-III oxidase family. In terms of assembly, homodimer. A divalent metal cation is required as a cofactor.

It localises to the cytoplasm. The catalysed reaction is coproporphyrinogen III + O2 + 2 H(+) = protoporphyrinogen IX + 2 CO2 + 2 H2O. The protein operates within porphyrin-containing compound metabolism; protoporphyrin-IX biosynthesis; protoporphyrinogen-IX from coproporphyrinogen-III (O2 route): step 1/1. Involved in the heme biosynthesis. Catalyzes the aerobic oxidative decarboxylation of propionate groups of rings A and B of coproporphyrinogen-III to yield the vinyl groups in protoporphyrinogen-IX. The sequence is that of Oxygen-dependent coproporphyrinogen-III oxidase from Sodalis glossinidius (strain morsitans).